Consider the following 420-residue polypeptide: UDP-N-acetylglucosamine 1-carboxyvinyltransferase (420 aa).

22–23 (KN) lines the phosphoenolpyruvate pocket. Arg-95 serves as a coordination point for UDP-N-acetyl-alpha-D-glucosamine. Cys-119 (proton donor) is an active-site residue. Residue Cys-119 is modified to 2-(S-cysteinyl)pyruvic acid O-phosphothioketal. Residues 124-128 (RPIDQ), Asp-307, and Ile-329 contribute to the UDP-N-acetyl-alpha-D-glucosamine site.

Belongs to the EPSP synthase family. MurA subfamily.

The protein resides in the cytoplasm. The catalysed reaction is phosphoenolpyruvate + UDP-N-acetyl-alpha-D-glucosamine = UDP-N-acetyl-3-O-(1-carboxyvinyl)-alpha-D-glucosamine + phosphate. It participates in cell wall biogenesis; peptidoglycan biosynthesis. In terms of biological role, cell wall formation. Adds enolpyruvyl to UDP-N-acetylglucosamine. The chain is UDP-N-acetylglucosamine 1-carboxyvinyltransferase from Myxococcus xanthus (strain DK1622).